Consider the following 257-residue polypeptide: MDQVYNIVMAYILTLIISPLYSYLIGSLNASIILSLVFKKQDVRLFASKNAGMTNMIRVHGKKLGILTLFLDIIKPITTVSLTYIIYKYALDAPFDLSNGFNQAILVYFGGIFTIIGHCYPIFFKFQGGKGVACYGGFLITVDPIVALIGIITLLVILLITKYMSLSAMITATFTCFLVLVPGINYIPYYNQNFTTYFFDLNYVIKGIWYVWFFLLVSASLLIYRHKTNILSIATKQERKTILFHTKSKDNLSDVNK.

Transmembrane regions (helical) follow at residues 7-27 (IVMA…LIGS), 66-86 (ILTL…TYII), 104-124 (AILV…PIFF), 140-160 (ITVD…ILLI), 164-184 (MSLS…VPGI), and 203-223 (YVIK…SLLI).

It belongs to the PlsY family. As to quaternary structure, probably interacts with PlsX.

The protein resides in the cell membrane. It catalyses the reaction an acyl phosphate + sn-glycerol 3-phosphate = a 1-acyl-sn-glycero-3-phosphate + phosphate. Its pathway is lipid metabolism; phospholipid metabolism. Its function is as follows. Catalyzes the transfer of an acyl group from acyl-phosphate (acyl-PO(4)) to glycerol-3-phosphate (G3P) to form lysophosphatidic acid (LPA). This enzyme utilizes acyl-phosphate as fatty acyl donor, but not acyl-CoA or acyl-ACP. The polypeptide is Glycerol-3-phosphate acyltransferase (Ureaplasma parvum serovar 3 (strain ATCC 700970)).